Consider the following 241-residue polypeptide: Fas-associated death domain protein (241 aa).

The interval 1–101 (MPGNHWYDIL…VNIYQEERLA (101 aa)) is death-inducing. Positions 151-237 (RKRTAVFNKI…RNDIKRKVEQ (87 aa)) constitute a Death domain.

N-terminus interacts with Dredd. Interacts with imd.

It localises to the cytoplasm. In terms of biological role, component of the IMD signaling pathway and is required for the host defense against Gram-negative bacteria. Interacts with Dredd, promotes cleavage of Dredd and is necessary and sufficient for enhancing Dredd-induced apoptosis. The sequence is that of Fas-associated death domain protein (Fadd) from Drosophila pseudoobscura pseudoobscura (Fruit fly).